A 199-amino-acid polypeptide reads, in one-letter code: Acireductone dioxygenase 1 (199 aa).

Residues H99, H101, E105, and H144 each contribute to the Fe(2+) site. The Ni(2+) site is built by H99, H101, E105, and H144.

Belongs to the acireductone dioxygenase (ARD) family. The cofactor is Fe(2+). Ni(2+) is required as a cofactor.

It is found in the cytoplasm. It localises to the nucleus. The enzyme catalyses 1,2-dihydroxy-5-(methylsulfanyl)pent-1-en-3-one + O2 = 4-methylsulfanyl-2-oxobutanoate + formate + 2 H(+). It catalyses the reaction 1,2-dihydroxy-5-(methylsulfanyl)pent-1-en-3-one + O2 = 3-(methylsulfanyl)propanoate + CO + formate + 2 H(+). It functions in the pathway amino-acid biosynthesis; L-methionine biosynthesis via salvage pathway; L-methionine from S-methyl-5-thio-alpha-D-ribose 1-phosphate: step 5/6. In terms of biological role, catalyzes 2 different reactions between oxygen and the acireductone 1,2-dihydroxy-3-keto-5-methylthiopentene (DHK-MTPene) depending upon the metal bound in the active site. Fe-containing acireductone dioxygenase (Fe-ARD) produces formate and 2-keto-4-methylthiobutyrate (KMTB), the alpha-ketoacid precursor of methionine in the methionine recycle pathway. Ni-containing acireductone dioxygenase (Ni-ARD) produces methylthiopropionate, carbon monoxide and formate, and does not lie on the methionine recycle pathway. The chain is Acireductone dioxygenase 1 (ARD1) from Oryza sativa subsp. indica (Rice).